The chain runs to 511 residues: Probable Xaa-Pro aminopeptidase MAA_08947 (511 aa).

Mn(2+) is bound by residues D275, D286, E439, and E480.

This sequence belongs to the peptidase M24B family. It depends on Mn(2+) as a cofactor.

It carries out the reaction Release of any N-terminal amino acid, including proline, that is linked to proline, even from a dipeptide or tripeptide.. Functionally, catalyzes the removal of a penultimate prolyl residue from the N-termini of peptides. This Metarhizium robertsii (strain ARSEF 23 / ATCC MYA-3075) (Metarhizium anisopliae (strain ARSEF 23)) protein is Probable Xaa-Pro aminopeptidase MAA_08947.